The sequence spans 542 residues: Esterase 6 (542 aa).

Residues 1–19 (MNYVGLIIVLSCLWLGSNA) form the signal peptide. An N-linked (GlcNAc...) asparagine glycan is attached at N40. C84 and C103 are oxidised to a cystine. S207 acts as the Acyl-ester intermediate in catalysis. C259 and C271 are joined by a disulfide. N-linked (GlcNAc...) asparagine glycosylation is found at N418 and N454. H464 functions as the Charge relay system in the catalytic mechanism. A disulfide bridge links C512 with C533.

This sequence belongs to the type-B carboxylesterase/lipase family. Monomer.

The protein localises to the secreted. It catalyses the reaction a carboxylic ester + H2O = an alcohol + a carboxylate + H(+). Functionally, transferred from the ejaculatory bulbs of males to the female genitals upon copulation, plays an important role in the reproductive biology. The sequence is that of Esterase 6 (Est-6) from Drosophila simulans (Fruit fly).